We begin with the raw amino-acid sequence, 207 residues long: dTTP/UTP pyrophosphatase (207 aa).

Residue Asp-79 is the Proton acceptor of the active site.

It belongs to the Maf family. YhdE subfamily. A divalent metal cation is required as a cofactor.

The protein localises to the cytoplasm. It catalyses the reaction dTTP + H2O = dTMP + diphosphate + H(+). The catalysed reaction is UTP + H2O = UMP + diphosphate + H(+). In terms of biological role, nucleoside triphosphate pyrophosphatase that hydrolyzes dTTP and UTP. May have a dual role in cell division arrest and in preventing the incorporation of modified nucleotides into cellular nucleic acids. The chain is dTTP/UTP pyrophosphatase from Rhodopseudomonas palustris (strain ATCC BAA-98 / CGA009).